Consider the following 606-residue polypeptide: Thrombospondin-related anonymous protein (606 aa).

Residues 1 to 24 (MKLLGNSKYFFVVLLLCISVFLNG) form the signal peptide. Residues 43-228 (DLHILLDGSG…TMIKPFLSKV (186 aa)) form the VWFA domain. Positions 235-281 (VALCGKWEEWSECSTTCDNGTKIRKRKVLHPNCAGEMTAPCKVRDCP) constitute a TSP type-1 domain. Positions 301 to 541 (PVEPIEPAEP…SKKQSKSNNG (241 aa)) are disordered. 3 stretches are compositionally biased toward low complexity: residues 409-425 (ENPF…IIAP), 440-450 (ELPNNLPESPS), and 459-479 (PNDN…IPNK). Basic and acidic residues-rich tracts occupy residues 487-504 (NPYK…RSND) and 516-532 (DKLE…ENKS). A helical transmembrane segment spans residues 544–564 (IAGGIIGGLAIIGCIGVGYNF).

In terms of assembly, interacts (via integrin-like A-domain) with Anopheles gambiae saglin/SG1F; the interaction probably promotes sporozoite invasion of salivary gland. Interacts (via integrin-like A-domain) with human AHSG; the interaction promotes sporozoite invasion of hepatocytes and formation of exoerythrocytic forms of parasites in human hepatoma HepG2 cells.

The protein resides in the cell membrane. Its subcellular location is the cytoplasm. Functionally, promotes parasite ability to invade host hepatocytes. Promotes parasite ability to invade mosquito salivary glands. Required for sporozoite gliding motility. In Plasmodium berghei (strain Anka), this protein is Thrombospondin-related anonymous protein.